Consider the following 460-residue polypeptide: Telomere-binding protein homolog (460 aa).

This sequence belongs to the telombin family.

It localises to the nucleus. It is found in the chromosome. Its subcellular location is the telomere. Its function is as follows. May bind telomeric T4G4 sequences. This is Telomere-binding protein homolog from Euplotes crassus.